The primary structure comprises 342 residues: N-acetyl-gamma-glutamyl-phosphate reductase (342 aa).

Cys-146 is an active-site residue.

It belongs to the NAGSA dehydrogenase family. Type 1 subfamily.

Its subcellular location is the cytoplasm. It carries out the reaction N-acetyl-L-glutamate 5-semialdehyde + phosphate + NADP(+) = N-acetyl-L-glutamyl 5-phosphate + NADPH + H(+). It participates in amino-acid biosynthesis; L-arginine biosynthesis; N(2)-acetyl-L-ornithine from L-glutamate: step 3/4. Its function is as follows. Catalyzes the NADPH-dependent reduction of N-acetyl-5-glutamyl phosphate to yield N-acetyl-L-glutamate 5-semialdehyde. In Streptomyces avermitilis (strain ATCC 31267 / DSM 46492 / JCM 5070 / NBRC 14893 / NCIMB 12804 / NRRL 8165 / MA-4680), this protein is N-acetyl-gamma-glutamyl-phosphate reductase.